Reading from the N-terminus, the 400-residue chain is PHD finger protein 24 (400 aa).

A lipid anchor (N-myristoyl glycine) is attached at Gly-2. Basic and acidic residues predominate over residues 29–38 (RDRPSIRRGG). Residues 29 to 65 (RDRPSIRRGGELPGSRRGTVEGSVQEVQEEKEAEASA) are disordered. Arg-36 is subject to Omega-N-methylarginine. Ser-43 is modified (phosphoserine). Thr-47 is subject to Phosphothreonine. The residue at position 51 (Ser-51) is a Phosphoserine. The PHD-type zinc-finger motif lies at 129–190 (NDEMCDVCEV…TGWSCYYCDN (62 aa)). Arg-307 carries the omega-N-methylarginine modification.

The protein is PHD finger protein 24 of Mus musculus (Mouse).